The following is a 196-amino-acid chain: Flagellar transcriptional regulator FlhC (196 aa).

Cys138, Cys141, Cys158, and Cys161 together coordinate Zn(2+).

The protein belongs to the FlhC family. As to quaternary structure, heterohexamer composed of two FlhC and four FlhD subunits. Each FlhC binds a FlhD dimer, forming a heterotrimer, and a hexamer assembles by dimerization of two heterotrimers. The cofactor is Zn(2+).

It is found in the cytoplasm. Functionally, functions in complex with FlhD as a master transcriptional regulator that regulates transcription of several flagellar and non-flagellar operons by binding to their promoter region. Activates expression of class 2 flagellar genes, including fliA, which is a flagellum-specific sigma factor that turns on the class 3 genes. Also regulates genes whose products function in a variety of physiological pathways. This chain is Flagellar transcriptional regulator FlhC, found in Sodalis glossinidius (strain morsitans).